A 643-amino-acid polypeptide reads, in one-letter code: Coiled-coil domain-containing protein 8 (643 aa).

The disordered stretch occupies residues 93 to 124; it reads VGTYDSSNGSDSELSDFDTSKVKGNRGSGKTR. Phosphoserine occurs at positions 141 and 144. Disordered regions lie at residues 156 to 191, 206 to 492, 519 to 540, 553 to 577, and 603 to 643; these read RRGE…KGDR, QRVR…TPRA, IDSQ…NQRV, DQRE…ARKQ, and PRLP…EEQL. Residues 218–227 are compositionally biased toward polar residues; the sequence is EVGQAQQSSI. A compositionally biased stretch (basic and acidic residues) spans 230-247; it reads RAGEMRHSHTSPDLDDSS. Residues 248 to 259 show a composition bias toward polar residues; the sequence is RNTGDLSDQTLI. Residues 261–276 are compositionally biased toward basic residues; it reads RRWKPKIKWVSLRRCR. Composition is skewed to low complexity over residues 294–399, 409–432, and 459–473; these read AAEN…AEAA, NPRT…EATA, and RVEA…AAAS. A compositionally biased stretch (polar residues) spans 528–537; that stretch reads VNQSTGATEN. The PxLPxI/L motif; mediates interaction with ANKRA2 motif lies at 603–609; the sequence is PRLPTLP. Positions 626–643 are enriched in basic and acidic residues; sequence LRADTRADMEHREQEEQL.

In terms of assembly, component of the 3M complex, composed of core components CUL7, CCDC8 and OBSL1. Interacts (via PxLPxI/L motif) with ANKRA2 (via ankyrin repeats); may link the 3M complex to histone deacetylases including HDAC4 and HDAC5.

It localises to the cytoplasm. It is found in the cytoskeleton. The protein localises to the microtubule organizing center. The protein resides in the centrosome. Functionally, core component of the 3M complex, a complex required to regulate microtubule dynamics and genome integrity. It is unclear how the 3M complex regulates microtubules, it could act by controlling the level of a microtubule stabilizer. Required for localization of CUL7 to the centrosome. This is Coiled-coil domain-containing protein 8 (Ccdc8) from Rattus norvegicus (Rat).